The sequence spans 283 residues: MSDKEQTSGNTDLENAPAGYYSSHDNDVNGVAEDERPSHDSLGKIYTGGDNNEYIYIGRQKFLKSDLYQAFGGTLNPGLAPAPVHKFANPAPLGLSAFALTTFVLSMFNARAQGITVPNVVVGCAMFYGGLVQLIAGIWEIALENTFGGTALCSYGGFWLSFAAIYIPWFGILEAYEDNESDLNNALGFYLLGWAIFTFGLTVCTMKSTVMFFLLFFLLALTFLLLSIGHFANRLGVTRAGGVLGVVVAFIAWYNAYAGVATKQNSYVLARPFPLPSTERVIF.

Positions 1–41 (MSDKEQTSGNTDLENAPAGYYSSHDNDVNGVAEDERPSHDS) are disordered. At 1–89 (MSDKEQTSGN…APAPVHKFAN (89 aa)) the chain is on the cytoplasmic side. The chain crosses the membrane as a helical span at residues 90 to 110 (PAPLGLSAFALTTFVLSMFNA). At 111–120 (RAQGITVPNV) the chain is on the extracellular side. The chain crosses the membrane as a helical span at residues 121–141 (VVGCAMFYGGLVQLIAGIWEI). At 142–151 (ALENTFGGTA) the chain is on the cytoplasmic side. A helical transmembrane segment spans residues 152–172 (LCSYGGFWLSFAAIYIPWFGI). At 173–185 (LEAYEDNESDLNN) the chain is on the extracellular side. Residues 186-206 (ALGFYLLGWAIFTFGLTVCTM) traverse the membrane as a helical segment. Residues 207-208 (KS) lie on the Cytoplasmic side of the membrane. Residues 209–229 (TVMFFLLFFLLALTFLLLSIG) form a helical membrane-spanning segment. Over 230 to 240 (HFANRLGVTRA) the chain is Extracellular. The chain crosses the membrane as a helical span at residues 241–261 (GGVLGVVVAFIAWYNAYAGVA). The Cytoplasmic segment spans residues 262 to 283 (TKQNSYVLARPFPLPSTERVIF).

It belongs to the acetate uptake transporter (AceTr) (TC 2.A.96) family.

The protein localises to the cell membrane. Its subcellular location is the vacuole membrane. Transporter protein required for ammonia export and acetate uptake and resistance. Necessary for up-regulation and down-regulation of meiotic plaque (MP) component levels in a dependency on external acetate. Has a role in ascus formation. The polypeptide is Accumulation of dyads protein 2 (ADY2) (Saccharomyces cerevisiae (strain ATCC 204508 / S288c) (Baker's yeast)).